Consider the following 492-residue polypeptide: MEPSSKKVTGRLMLAVGGAVLGSLQFGYNTGVINAPQKVIEEFYNQTWIHRYGERILPTTLTTLWSLSVAIFSVGGMIGSFSVGLFVNRFGRRNSMLMMNLLAFVSAVLMGFSKLAKSFEMLILGRFIIGVYCGLTTGFVPMYVGEVSPTALRGALGTLHQLGIVVGILIAQVFGLDSIMGNEDLWPLLLSVIFVPALLQCIVLPLCPESPRFLLINRNEENRAKSVLKKLRGNADVTRDLQEMKEESRQMMREKKVTILELFRSPAYRQPILSAVVLQLSQQLSGINAVFYYSTSIFEKAGVQQPVYATIGSGIVNTAFTVVSLFVVERAGRRTLHLIGLAGMAACAVLMTIALALLEQLPWMSYLSIVAIFGFVAFFEVGPGPIPWFIVAELFSQGPRPAAVAVAGFSNWTSNFIVGMCFQYVEQLCGPYVFIIFTVLLVLFFIFTYFKVPETKGRTFDEIASGFRQGGASQSDKTPEELFHPLGADSQV.

Met-1 carries the N-acetylmethionine modification. The Cytoplasmic portion of the chain corresponds to Met-1–Arg-11. The chain crosses the membrane as a helical span at residues Leu-12–Ile-33. The Extracellular portion of the chain corresponds to Asn-34–Ser-66. The N-linked (GlcNAc...) asparagine glycan is linked to Asn-45. The helical transmembrane segment at Leu-67–Val-87 threads the bilayer. Over Asn-88–Phe-90 the chain is Cytoplasmic. A helical transmembrane segment spans residues Gly-91–Phe-112. Over Ser-113–Glu-120 the chain is Extracellular. A helical transmembrane segment spans residues Met-121–Val-144. Residues Gly-145–Ala-155 lie on the Cytoplasmic side of the membrane. Residues Leu-156–Leu-176 form a helical membrane-spanning segment. Gln-161 contributes to the D-glucose binding site. Residues Asp-177 to Leu-185 are Extracellular-facing. A helical transmembrane segment spans residues Trp-186–Leu-206. Residues Cys-207–Pro-271 are Cytoplasmic-facing. At Ser-226 the chain carries Phosphoserine. The helical transmembrane segment at Ile-272–Tyr-293 threads the bilayer. D-glucose is bound by residues Gln-282–Gln-283 and Asn-288. Over Ser-294–Pro-306 the chain is Extracellular. The helical transmembrane segment at Val-307–Val-328 threads the bilayer. A D-glucose-binding site is contributed by Asn-317. The Cytoplasmic segment spans residues Glu-329–Arg-334. The chain crosses the membrane as a helical span at residues Thr-335 to Leu-355. The Extracellular segment spans residues Ala-356–Ser-365. A helical transmembrane segment spans residues Tyr-366 to Trp-388. Residues Glu-380 and Trp-388 each coordinate D-glucose. The Cytoplasmic portion of the chain corresponds to Phe-389 to Pro-401. Residues Ala-402–Phe-422 form a helical membrane-spanning segment. The Extracellular portion of the chain corresponds to Gln-423 to Cys-429. The chain crosses the membrane as a helical span at residues Gly-430 to Phe-450. Topologically, residues Lys-451–Val-492 are cytoplasmic. Ser-465 is modified (phosphoserine). Residues Arg-468–Val-492 form a disordered region. Residue Thr-478 is modified to Phosphothreonine. At Ser-490 the chain carries Phosphoserine.

It belongs to the major facilitator superfamily. Sugar transporter (TC 2.A.1.1) family. Glucose transporter subfamily. In terms of assembly, found in a complex with ADD2, DMTN and SLC2A1. Interacts (via C-terminus cytoplasmic region) with DMTN. Interacts with SNX27; the interaction is required when endocytosed to prevent degradation in lysosomes and promote recycling to the plasma membrane. Interacts with GIPC (via PDZ domain). Interacts with STOM. Interacts with SGTA (via Gln-rich region). Interacts with BSG. Interacts with SMIM43; the interaction may promote SLC2A1-mediated glucose transport to meet the energy needs of mesendoderm differentiation. Phosphorylation at Ser-226 by PKC promotes glucose uptake by increasing cell membrane localization.

It is found in the cell membrane. The protein localises to the photoreceptor inner segment. It carries out the reaction D-glucose(out) = D-glucose(in). Its activity is regulated as follows. The uptake of glucose is inhibited by cytochalasin B. Glucose uptake is increased in response to phorbol ester 12-O-tetradecanoylphorbol-13-acetate (TPA) treatment: TPA-induced glucose uptake requires phosphorylation at Ser-226. Facilitative glucose transporter, which is responsible for constitutive or basal glucose uptake. Has a very broad substrate specificity; can transport a wide range of aldoses including both pentoses and hexoses. Most important energy carrier of the brain: present at the blood-brain barrier and assures the energy-independent, facilitative transport of glucose into the brain. In association with BSG and NXNL1, promotes retinal cone survival by increasing glucose uptake into photoreceptors. Required for mesendoderm differentiation. This Oryctolagus cuniculus (Rabbit) protein is Solute carrier family 2, facilitated glucose transporter member 1.